The chain runs to 660 residues: Poly [ADP-ribose] polymerase 2-A (660 aa).

The SAP 1 domain maps to 2 to 36 (SARLRVEELRAELQRRGLDASGNKPVLVRRLDAAI). Positions 40–92 (EEEEAAVSAAAKEEADAGGVVDGEGNGEDKRKRKRRGDGEDVDNSESDAAKLE) are disordered. The Nuclear localization signal signature appears at 69–75 (KRKRKRR). An SAP 2 domain is found at 91–125 (LEGMSYRELQALAKSRGLAANGSKKEVIERLLCAP). Residues 179–281 (TYHVLQVWFL…KSFECYARKY (103 aa)) enclose the WGR domain. Residues 308–426 (ETKLETRIAS…EIEIATKLLE (119 aa)) form the PARP alpha-helical domain. In terms of domain architecture, PARP catalytic spans 434–660 (DPLYARYKQL…LHVSFNFKKR (227 aa)).

The protein belongs to the ARTD/PARP family.

It localises to the nucleus. It carries out the reaction NAD(+) + (ADP-D-ribosyl)n-acceptor = nicotinamide + (ADP-D-ribosyl)n+1-acceptor + H(+).. The enzyme catalyses L-aspartyl-[protein] + NAD(+) = 4-O-(ADP-D-ribosyl)-L-aspartyl-[protein] + nicotinamide. The catalysed reaction is L-glutamyl-[protein] + NAD(+) = 5-O-(ADP-D-ribosyl)-L-glutamyl-[protein] + nicotinamide. Involved in the base excision repair (BER) pathway, by catalyzing the poly(ADP-ribosyl)ation of a limited number of acceptor proteins involved in chromatin architecture and in DNA metabolism. This modification follows DNA damages and appears as an obligatory step in a detection/signaling pathway leading to the reparation of DNA strand breaks. The polypeptide is Poly [ADP-ribose] polymerase 2-A (PARP2-A) (Oryza sativa subsp. japonica (Rice)).